Reading from the N-terminus, the 257-residue chain is Flagellar brake protein YcgR 1 (257 aa).

The segment covering 1 to 18 (MDTTQSNGQTDTQGQLHA) has biased composition (polar residues). The segment at 1 to 30 (MDTTQSNGQTDTQGQLHAQTAEGGNDFGRR) is disordered. A PilZ domain is found at 133–246 (QRREYFRVDA…AENTLQRLIT (114 aa)).

It belongs to the YcgR family. As to quaternary structure, monomer. Interacts with the flagellar basal bodies.

It is found in the bacterial flagellum basal body. Its function is as follows. Acts as a flagellar brake, regulating swimming and swarming in a bis-(3'-5') cyclic diguanylic acid (c-di-GMP)-dependent manner. Binds 1 c-di-GMP dimer per subunit. Increasing levels of c-di-GMP lead to decreased motility. This is Flagellar brake protein YcgR 1 from Paraburkholderia phytofirmans (strain DSM 17436 / LMG 22146 / PsJN) (Burkholderia phytofirmans).